The sequence spans 312 residues: Pantothenate synthetase (312 aa).

Position 42 to 49 (42 to 49) interacts with ATP; the sequence is MGALHTGH. His-49 functions as the Proton donor in the catalytic mechanism. Gln-73 is a binding site for (R)-pantoate. Gln-73 provides a ligand contact to beta-alanine. Residue 159-162 coordinates ATP; sequence GEKD. A (R)-pantoate-binding site is contributed by Gln-165. Residues Val-188 and 196 to 199 contribute to the ATP site; that span reads LSSR.

The protein belongs to the pantothenate synthetase family. Homodimer.

The protein localises to the cytoplasm. It catalyses the reaction (R)-pantoate + beta-alanine + ATP = (R)-pantothenate + AMP + diphosphate + H(+). It functions in the pathway cofactor biosynthesis; (R)-pantothenate biosynthesis; (R)-pantothenate from (R)-pantoate and beta-alanine: step 1/1. Its function is as follows. Catalyzes the condensation of pantoate with beta-alanine in an ATP-dependent reaction via a pantoyl-adenylate intermediate. This Rhodococcus jostii (strain RHA1) protein is Pantothenate synthetase.